The sequence spans 313 residues: Transcription factor MafB (313 aa).

Disordered regions lie at residues Q51 to T77 and M151 to R197. The span at S55–P76 shows a compositional bias: low complexity. Basic residues predominate over residues P154 to H166. The segment covering Q167–S192 has biased composition (low complexity). The basic motif stretch occupies residues R225–K250. The bZIP domain occupies R225 to L288. Residues L253–L274 are leucine-zipper. The segment at N292–M313 is disordered.

Belongs to the bZIP family. Maf subfamily. Homodimer or heterodimer with other bHLH-Zip transcription factors. Binds DNA as a homodimer or a heterodimer.

It is found in the nucleus. Functionally, acts as a transcriptional activator or repressor. Implicated in the regulation of cell-type specific gene expression and play a role in inductive events during lens development. This is Transcription factor MafB (mafb) from Xenopus laevis (African clawed frog).